Here is a 352-residue protein sequence, read N- to C-terminus: Probable RNA methyltransferase Mpe_A3613 (352 aa).

The active-site Proton acceptor is the E88. The Radical SAM core domain occupies 91–317 (LLPRDGLCVS…TKLRRSAGQD (227 aa)). C98 and C322 are disulfide-bonded. [4Fe-4S] cluster contacts are provided by C105, C109, and C112. S-adenosyl-L-methionine contacts are provided by residues 150–151 (GE), S180, 203–205 (SLH), and N279. C322 serves as the catalytic S-methylcysteine intermediate.

Belongs to the radical SAM superfamily. RlmN family. [4Fe-4S] cluster serves as cofactor.

It is found in the cytoplasm. The protein is Probable RNA methyltransferase Mpe_A3613 of Methylibium petroleiphilum (strain ATCC BAA-1232 / LMG 22953 / PM1).